Here is a 243-residue protein sequence, read N- to C-terminus: 7-cyano-7-deazaguanine synthase (243 aa).

9–19 (FSGGQDSTTCL) contributes to the ATP binding site. Residues C205, C220, C223, and C226 each contribute to the Zn(2+) site.

It belongs to the QueC family. Zn(2+) serves as cofactor.

The catalysed reaction is 7-carboxy-7-deazaguanine + NH4(+) + ATP = 7-cyano-7-deazaguanine + ADP + phosphate + H2O + H(+). Its pathway is purine metabolism; 7-cyano-7-deazaguanine biosynthesis. Catalyzes the ATP-dependent conversion of 7-carboxy-7-deazaguanine (CDG) to 7-cyano-7-deazaguanine (preQ(0)). This is 7-cyano-7-deazaguanine synthase from Albidiferax ferrireducens (strain ATCC BAA-621 / DSM 15236 / T118) (Rhodoferax ferrireducens).